Here is a 963-residue protein sequence, read N- to C-terminus: SH3 domain-binding protein 4 (963 aa).

The 60-residue stretch at 55–114 (GNAKEVIAIKDYCPTNFTTLKFSKGDHLYVLDTSGGEWWYAHNTTEMGYIPSSYVQPLNY) folds into the SH3 1 domain. A phosphoserine mark is found at Ser-131, Ser-246, Ser-251, Ser-279, and Ser-296. One can recognise a ZU5 domain in the interval 317–454 (TNIVCKLDSS…LEPCMYVAVV (138 aa)). Ser-637 is subject to Phosphoserine. The region spanning 654–724 (SSLKFGKLLK…HTKNVLVVGR (71 aa)) is the SH3 2 domain.

In terms of assembly, homodimer or homooligomer. Interacts with DNM2, EPS15, clathrin, the adapter protein complex 2/AP-2 and TFRC. Interacts with the Rag GTPases RRAGA, RRAGB, RRAGC and RRAGD; the interaction is most probably direct, preferentially occurs with their inactive GDP-bound form and is negatively regulated by amino acids. As to quaternary structure, (Microbial infection) Interacts with molluscum contagiosum virus protein MC159L; this interaction is important for the suppression of autophagy. Phosphorylated upon EGF stimulation. Phosphorylation prevents interaction with DNM2. Expressed in all tissues tested with higher expression in pancreas. Expressed by retinal pigment epithelial cells (at protein level).

Its subcellular location is the membrane. The protein resides in the clathrin-coated pit. It is found in the cytoplasmic vesicle. It localises to the clathrin-coated vesicle. The protein localises to the nucleus. Its function is as follows. May function in transferrin receptor internalization at the plasma membrane through a cargo-specific control of clathrin-mediated endocytosis. Alternatively, may act as a negative regulator of the amino acid-induced TOR signaling by inhibiting the formation of active Rag GTPase complexes. Preferentially binds inactive Rag GTPase complexes and prevents their interaction with the mTORC1 complex inhibiting its relocalization to lysosomes and its activation. Thereby, may indirectly regulate cell growth, proliferation and autophagy. This chain is SH3 domain-binding protein 4 (SH3BP4), found in Homo sapiens (Human).